We begin with the raw amino-acid sequence, 455 residues long: UDP-N-acetylmuramate--L-alanine ligase (455 aa).

109 to 115 is an ATP binding site; it reads GTHGKTT.

It belongs to the MurCDEF family.

Its subcellular location is the cytoplasm. It carries out the reaction UDP-N-acetyl-alpha-D-muramate + L-alanine + ATP = UDP-N-acetyl-alpha-D-muramoyl-L-alanine + ADP + phosphate + H(+). The protein operates within cell wall biogenesis; peptidoglycan biosynthesis. Functionally, cell wall formation. This Caldicellulosiruptor saccharolyticus (strain ATCC 43494 / DSM 8903 / Tp8T 6331) protein is UDP-N-acetylmuramate--L-alanine ligase.